The sequence spans 210 residues: MDDEEETYRLWKIRKTIMQLCHDRGYLVTQDELDQTLEEFKAQFGDKPSEGRPRRTDLTVLVAHNDDPTDQMFVFFPEEPKVGIKTIKVYCQRMQEENITRALIVVQQGMTPSAKQSLVDMAPKYVLEQFLQQELLINITEHELVPEHVVMTKEEVTELLARYKLRESQLPRIQAGDPVARYFGIKRGQVVKIIRPSETAGRYITYRLVQ.

Met1 bears the N-acetylmethionine mark. A Glycyl lysine isopeptide (Lys-Gly) (interchain with G-Cter in SUMO2) cross-link involves residue Lys81.

The protein belongs to the archaeal Rpo5/eukaryotic RPB5 RNA polymerase subunit family. In terms of assembly, component of the RNA polymerase I (Pol I), RNA polymerase II (Pol II) and RNA polymerase III (Pol III) complexes consisting of at least 13, 12 and 17 subunits, respectively. Pol I complex consists of a ten-subunit catalytic core composed of POLR1A/RPA1, POLR1B/RPA2, POLR1C/RPAC1, POLR1D/RPAC2, POLR1H/RPA12, POLR2E/RPABC1, POLR2F/RPABC2, POLR2H/RPABC3, POLR2K/RPABC4 and POLR2L/RPABC5; a mobile stalk subunit POLR1F/RPA43 protruding from the core and additional subunits homologous to general transcription factors POLR1E/RPA49 and POLR1G/RPA34. Part of Pol I pre-initiation complex (PIC), in which Pol I core assembles with RRN3 and promoter-bound UTBF and SL1/TIF-IB complex. Pol II complex contains a ten-subunit catalytic core composed of POLR2A/RPB1, POLR2B/RPB2, POLR2C/RPB3, POLR2I/RPB9, POLR2J/RPB11, POLR2E/RPABC1, POLR2F/RPABC2, POLR2H/RPABC3, POLR2K/RPABC4 and POLR2L/RPABC5 and a mobile stalk composed of two subunits POLR2D/RPB4 and POLR2G/RPB7. Part of Pol II(G) complex, in which Pol II core associates with an additional subunit POLR2M; unlike conventional Pol II, Pol II(G) functions as a transcriptional repressor. Part of TBP-based Pol II pre-initiation complex (PIC), in which Pol II core assembles with general transcription factors and other specific initiation factors including GTF2E1, GTF2E2, GTF2F1, GTF2F2, TCEA1, ERCC2, ERCC3, GTF2H2, GTF2H3, GTF2H4, GTF2H5, GTF2A1, GTF2A2, GTF2B and TBP; this large multi-subunit PIC complex mediates DNA unwinding and targets Pol II core to the transcription start site where the first phosphodiester bond forms. In Pol II complex, this subunit is present in 2-fold molar excess over the other subunits. Pol III complex consists of a ten-subunit catalytic core composed of POLR3A/RPC1, POLR3B/RPC2, POLR1C/RPAC1, POLR1D/RPAC2, POLR3K/RPC10, POLR2E/RPABC1, POLR2F/RPABC2, POLR2H/RPABC3, POLR2K/RPABC4 and POLR2L/RPABC5; a mobile stalk composed of two subunits POLR3H/RPC8 and CRCP/RPC9, protruding from the core and functioning primarily in transcription initiation; and additional subunits homologous to general transcription factors of the RNA polymerase II machinery, POLR3C/RPC3-POLR3F/RPC6-POLR3G/RPC7 heterotrimer required for transcription initiation and POLR3D/RPC4-POLR3E/RPC5 heterodimer involved in both transcription initiation and termination. Component of the PAQosome complex which is responsible for the biogenesis of several protein complexes and which consists of R2TP complex members RUVBL1, RUVBL2, RPAP3 and PIH1D1, URI complex members PFDN2, PFDN6, PDRG1, UXT and URI1 as well as ASDURF, POLR2E and DNAAF10/WDR92. Interacts with URI1.

It is found in the nucleus. Its subcellular location is the nucleolus. Its function is as follows. DNA-dependent RNA polymerase catalyzes the transcription of DNA into RNA using the four ribonucleoside triphosphates as substrates. Common component of RNA polymerases I, II and III which synthesize ribosomal RNA precursors, mRNA precursors and many functional non-coding RNAs, and small RNAs, such as 5S rRNA and tRNAs, respectively. Pol II is the central component of the basal RNA polymerase II transcription machinery. Pols are composed of mobile elements that move relative to each other. In Pol II, POLR2E/RPABC1 is part of the lower jaw surrounding the central large cleft and thought to grab the incoming DNA template. Seems to be the major component in this process. This Mus musculus (Mouse) protein is DNA-directed RNA polymerases I, II, and III subunit RPABC1.